The primary structure comprises 372 residues: GTPase Obg (372 aa).

The Obg domain maps to 1–159 (MKFIDEARIE…RMLKLELKVL (159 aa)). The segment at 128-147 (LHFKSSTNRAPRQKTDGKPG) is disordered. The region spanning 160-334 (ADVGLLGMPN…LVYAIHDYLV (175 aa)) is the OBG-type G domain. Residues 166-173 (GMPNAGKS), 191-195 (FTTLA), 213-216 (DIPG), 284-287 (NKLD), and 315-317 (SAL) each bind GTP. Mg(2+)-binding residues include serine 173 and threonine 193.

The protein belongs to the TRAFAC class OBG-HflX-like GTPase superfamily. OBG GTPase family. As to quaternary structure, monomer. Requires Mg(2+) as cofactor.

The protein resides in the cytoplasm. In terms of biological role, an essential GTPase which binds GTP, GDP and possibly (p)ppGpp with moderate affinity, with high nucleotide exchange rates and a fairly low GTP hydrolysis rate. Plays a role in control of the cell cycle, stress response, ribosome biogenesis and in those bacteria that undergo differentiation, in morphogenesis control. This chain is GTPase Obg, found in Burkholderia pseudomallei (strain 668).